Here is a 388-residue protein sequence, read N- to C-terminus: Glycoprotein-N-acetylgalactosamine 3-beta-galactosyltransferase 1 (388 aa).

Residues 1 to 12 (MAPISHYIGKTS) are Cytoplasmic-facing. Residues 13-30 (LTTLAIGIAIGITVSNIV) traverse the membrane as a helical; Signal-anchor for type II membrane protein segment. Over 31 to 388 (KFSSTQRRHF…LAQTDSKHIS (358 aa)) the chain is Lumenal. The disordered stretch occupies residues 43-65 (SGYIPDSPHSHGENDFVEGPDDS). N-linked (GlcNAc...) asparagine glycosylation occurs at N80. A disulfide bridge links C95 with C119. UDP contacts are provided by M98, N100, E142, G143, R144, K150, and D173. Positions 173 and 175 each coordinate Mn(2+). C238 and C253 are oxidised to a cystine. W292 contributes to the a glycoprotein binding site. C307 and C308 are joined by a disulfide. Residues H316 and Y317 each coordinate UDP. Position 316 (H316) interacts with Mn(2+). A disordered region spans residues 344–388 (STEEQDHGSSHKDTDAMKPEGKGMEDKEDEETNISLAQTDSKHIS). Residues 347–368 (EQDHGSSHKDTDAMKPEGKGME) show a composition bias toward basic and acidic residues. The N-linked (GlcNAc...) asparagine glycan is linked to N376.

The protein belongs to the glycosyltransferase 31 family. Beta3-Gal-T subfamily. Homodimer; disulfide-linked. Mn(2+) serves as cofactor.

It is found in the membrane. The catalysed reaction is an N-acetyl-alpha-D-galactosaminyl derivative + UDP-alpha-D-galactose = a beta-D-galactosyl-(1-&gt;3)-N-acetyl-alpha-D-galactosaminyl derivative + UDP + H(+). It participates in protein modification; protein glycosylation. Functionally, glycosyltransferase that generates the core 1 O-glycan Gal-beta1-3GalNAc-alpha1-Ser/Thr (T antigen), which is a precursor for many extended O-glycans in glycoproteins. The chain is Glycoprotein-N-acetylgalactosamine 3-beta-galactosyltransferase 1 from Biomphalaria glabrata (Bloodfluke planorb).